A 354-amino-acid polypeptide reads, in one-letter code: Rhodopsin (354 aa).

The Extracellular portion of the chain corresponds to 1–36; that stretch reads MNGTEGENFYVPMSNKTGVVRNPFEYPQYYLADHWM. Residues Asn2 and Asn15 are each glycosylated (N-linked (GlcNAc...) asparagine). The chain crosses the membrane as a helical span at residues 37 to 61; it reads FAVLAAYMFFLIITGFPVNFLTLFV. At 62-73 the chain is on the cytoplasmic side; that stretch reads TIQNKKLRQPLN. The helical transmembrane segment at 74–96 threads the bilayer; the sequence is YILLNLAVANLFMVFGGFTTTLI. The Extracellular portion of the chain corresponds to 97–110; the sequence is TSMNGYFVFGSTGC. Cysteines 110 and 187 form a disulfide. A helical membrane pass occupies residues 111–133; it reads NLEGFFATLGGEISLWSLVVLAI. A 'Ionic lock' involved in activated form stabilization motif is present at residues 134 to 136; it reads ERY. The Cytoplasmic portion of the chain corresponds to 134 to 152; that stretch reads ERYVVVCKPMSNFRFGSQH. The chain crosses the membrane as a helical span at residues 153 to 173; sequence AIAGVSLTWVMAMACAAPPLV. At 174 to 202 the chain is on the extracellular side; it reads GWSRYIPEGLQCSCGIDYYTPKPEINNVS. N-linked (GlcNAc...) asparagine glycosylation occurs at Asn200. A helical membrane pass occupies residues 203–224; it reads FVIYMFVVHFSIPLTIIFFCYG. At 225 to 252 the chain is on the cytoplasmic side; the sequence is RLVCTVKAAAAQQQESETTQRAEREVTR. Residues 253-274 traverse the membrane as a helical segment; it reads MVVIMVIGFLICWLPYASVALY. Over 275 to 286 the chain is Extracellular; sequence IFNNQGSEFGPV. Residues 287–308 form a helical membrane-spanning segment; the sequence is FMTIPSFFAKSSALYNPLIYIL. Lys296 is subject to N6-(retinylidene)lysine. Over 309-354 the chain is Cytoplasmic; that stretch reads MNKQFRNCMITTLCCGKNPFEEEESTSASASKTEASSVSSSQVSPA. S-palmitoyl cysteine attachment occurs at residues Cys322 and Cys323. The interval 333-354 is disordered; that stretch reads STSASASKTEASSVSSSQVSPA. Residues 334–354 are compositionally biased toward low complexity; sequence TSASASKTEASSVSSSQVSPA.

It belongs to the G-protein coupled receptor 1 family. Opsin subfamily. Phosphorylated on some or all of the serine and threonine residues present in the C-terminal region. Post-translationally, contains one covalently linked retinal chromophore.

It localises to the membrane. Its subcellular location is the cell projection. The protein localises to the cilium. It is found in the photoreceptor outer segment. Its function is as follows. Photoreceptor required for image-forming vision at low light intensity. While most salt water fish species use retinal as chromophore, most freshwater fish use 3-dehydroretinal, or a mixture of retinal and 3-dehydroretinal. Light-induced isomerization of 11-cis to all-trans retinal triggers a conformational change that activates signaling via G-proteins. Subsequent receptor phosphorylation mediates displacement of the bound G-protein alpha subunit by arrestin and terminates signaling. The protein is Rhodopsin (rho) of Galeus melastomus (Blackmouth catshark).